The sequence spans 296 residues: CDP-diacylglycerol--glycerol-3-phosphate 3-phosphatidyltransferase 1, chloroplastic/mitochondrial (296 aa).

Residues methionine 1–arginine 39 constitute a chloroplast and mitochondrion transit peptide. The span at phenylalanine 62 to serine 82 shows a compositional bias: low complexity. The segment at phenylalanine 62–lysine 103 is disordered. The next 5 membrane-spanning stretches (helical) occupy residues valine 104–alanine 124, phenylalanine 126–isoleucine 146, phenylalanine 164–leucine 184, isoleucine 189–isoleucine 209, and valine 261–tryptophan 281.

The protein belongs to the CDP-alcohol phosphatidyltransferase class-I family. It depends on Mn(2+) as a cofactor.

The protein localises to the plastid. The protein resides in the chloroplast membrane. Its subcellular location is the mitochondrion membrane. The enzyme catalyses a CDP-1,2-diacyl-sn-glycerol + sn-glycerol 3-phosphate = a 1,2-diacyl-sn-glycero-3-phospho-(1'-sn-glycero-3'-phosphate) + CMP + H(+). Its pathway is phospholipid metabolism; phosphatidylglycerol biosynthesis; phosphatidylglycerol from CDP-diacylglycerol: step 1/2. Functionally, catalyzes the committed step to the synthesis of the acidic phospholipids, including phosphatidylglycerol (PG). Transfers specifically a phosphatidyl group from CDP-diacylglycerol to glycerol-3-phosphate to form phosphatidylglycerophosphate. Cannot catalyze the phosphatidyl group transfer to inositol, serine, choline or phosphatidylglycerol. Possesses high activity with CDP-dipalmitoylglycerol and low activity with CDP-dioleoylglycerol. Essential for chloroplast differentiation and PG accumulation in thylakoids, an essential process for the assembly of antenna-reaction center complexes to optimize energy transfer from antenna pigments, and for subsequent photochemical efficiency of photosystem II (PSII). During cold acclimation (at 5 degrees Celsius), necessary for the photosystem I (PSI) photochemistry, including both reaction center and light-harvesting integrity. But dispensable in mitochondrion, being redundant with PGPS2 for the production of PG and its derivative cardiolipin (CL) in mitochondrial membranes. Together with PGPS2, required for the proper embryo development by providing PG accurate levels. This chain is CDP-diacylglycerol--glycerol-3-phosphate 3-phosphatidyltransferase 1, chloroplastic/mitochondrial, found in Arabidopsis thaliana (Mouse-ear cress).